A 912-amino-acid chain; its full sequence is Protein translocase subunit SecA (912 aa).

Residues glutamine 87, 105–109 (GEGKT), and aspartate 508 contribute to the ATP site. Residues 855–912 (QHQDAGGYGADEEVEQMQGGNAPVPVSQVTRDEPKVGRNDPCPCGSGKKYKHCHGQLS) form a disordered region. Residues cysteine 896, cysteine 898, cysteine 907, and histidine 908 each coordinate Zn(2+). Positions 902 to 912 (KKYKHCHGQLS) are enriched in basic residues.

The protein belongs to the SecA family. Monomer and homodimer. Part of the essential Sec protein translocation apparatus which comprises SecA, SecYEG and auxiliary proteins SecDF-YajC and YidC. The cofactor is Zn(2+).

The protein resides in the cell inner membrane. It is found in the cytoplasm. The catalysed reaction is ATP + H2O + cellular proteinSide 1 = ADP + phosphate + cellular proteinSide 2.. Its function is as follows. Part of the Sec protein translocase complex. Interacts with the SecYEG preprotein conducting channel. Has a central role in coupling the hydrolysis of ATP to the transfer of proteins into and across the cell membrane, serving both as a receptor for the preprotein-SecB complex and as an ATP-driven molecular motor driving the stepwise translocation of polypeptide chains across the membrane. This chain is Protein translocase subunit SecA, found in Xanthomonas campestris pv. campestris (strain 8004).